We begin with the raw amino-acid sequence, 152 residues long: Transcriptional repressor NrdR (152 aa).

The segment at 3-33 is a zinc-finger region; sequence CSICKKGETSVVDSRPTEDGTAIRRRRLCVC. The region spanning 48-138 is the ATP-cone domain; the sequence is IMVVKKNGRK…VYRNFREEKD (91 aa).

It belongs to the NrdR family. Zn(2+) serves as cofactor.

In terms of biological role, negatively regulates transcription of bacterial ribonucleotide reductase nrd genes and operons by binding to NrdR-boxes. The polypeptide is Transcriptional repressor NrdR (Pelagibacter ubique (strain HTCC1062)).